The following is a 117-amino-acid chain: Nascent polypeptide-associated complex protein (117 aa).

The NAC-A/B domain occupies 3-72 (PVNPRDLEKM…YTVEKPREET (70 aa)).

The protein belongs to the NAC-alpha family. In terms of assembly, homodimer. Interacts with the ribosome. Binds ribosomal RNA.

Its function is as follows. Contacts the emerging nascent chain on the ribosome. The protein is Nascent polypeptide-associated complex protein of Aeropyrum pernix (strain ATCC 700893 / DSM 11879 / JCM 9820 / NBRC 100138 / K1).